Consider the following 139-residue polypeptide: MIKRYEACFLFKSEEIEYKGSLEEVKKSLEFFGATDVVSNFIGERALEYPIKKQARGRYEIIEFSMEGNNLKEFESRLKLIRNLLRYMILVKIVRKINTKKIKRRNFREFRDNIDKDSLKGASKVETPTGPESTDIQEK.

Positions Lys120–Lys139 are disordered. A compositionally biased stretch (polar residues) spans Gly130 to Lys139.

The protein belongs to the bacterial ribosomal protein bS6 family.

Functionally, binds together with bS18 to 16S ribosomal RNA. This Borreliella burgdorferi (strain ATCC 35210 / DSM 4680 / CIP 102532 / B31) (Borrelia burgdorferi) protein is Small ribosomal subunit protein bS6 (rpsF).